Here is a 142-residue protein sequence, read N- to C-terminus: MGRLVFVSFGGWDVFLSLSGTGADCPSDWSSYEGHCYRVFQQEMTWEAAEKFCTQQHQKSHPVYFRSSEEVDFLVSILKFDLFWMGWRDIWNERRLQWSDGTKVNYKAWSAEPECVVCRATDNQWLSTSCSKTHNVVCKFQA.

The signal sequence occupies residues 1–23; the sequence is MGRLVFVSFGGWDVFLSLSGTGA. 3 disulfide bridges follow: cysteine 25–cysteine 36, cysteine 53–cysteine 138, and cysteine 115–cysteine 130. The C-type lectin domain occupies 32–139; sequence YEGHCYRVFQ…CSKTHNVVCK (108 aa).

Belongs to the snaclec family. Heteromultimer; disulfide-linked. In terms of tissue distribution, expressed by the venom gland.

It is found in the secreted. In terms of biological role, interferes with one step of hemostasis (modulation of platelet aggregation, or coagulation cascade, for example). The protein is C-type lectin 13 of Crotalus adamanteus (Eastern diamondback rattlesnake).